Consider the following 526-residue polypeptide: Glucomannan 4-beta-mannosyltransferase 1 (526 aa).

The helical transmembrane segment at Val-31–Phe-51 threads the bilayer. The active site involves Asp-130. The substrate site is built by Asp-189 and Asp-191. The active site involves Asp-283. The next 4 helical transmembrane spans lie at Ile-362–Val-382, Ile-399–Leu-419, Pro-477–Gly-497, and Phe-501–Gly-521.

The protein belongs to the glycosyltransferase 2 family. Plant cellulose synthase-like A subfamily.

The protein localises to the golgi apparatus membrane. It catalyses the reaction GDP-mannose + (glucomannan)n = GDP + (glucomannan)n+1.. Its function is as follows. Possesses 4-beta-mannosyltransferase activity on mannan using GDP-mannose. The beta-1,4-mannan product is the backbone for galactomannan synthesis by galactomannan galactosyltransferase. The galactomannan is a hemicellulosic storage polysaccharide accumulated in the form of secondary wall thickenings in the seed endosperm. In Cyamopsis tetragonoloba (Guar), this protein is Glucomannan 4-beta-mannosyltransferase 1.